The chain runs to 314 residues: tRNA-cytidine(32) 2-sulfurtransferase (314 aa).

The PP-loop motif motif lies at 58–63 (SGGKDS). [4Fe-4S] cluster-binding residues include C133, C136, and C224.

This sequence belongs to the TtcA family. In terms of assembly, homodimer. Mg(2+) is required as a cofactor. The cofactor is [4Fe-4S] cluster.

It is found in the cytoplasm. It catalyses the reaction cytidine(32) in tRNA + S-sulfanyl-L-cysteinyl-[cysteine desulfurase] + AH2 + ATP = 2-thiocytidine(32) in tRNA + L-cysteinyl-[cysteine desulfurase] + A + AMP + diphosphate + H(+). It participates in tRNA modification. Functionally, catalyzes the ATP-dependent 2-thiolation of cytidine in position 32 of tRNA, to form 2-thiocytidine (s(2)C32). The sulfur atoms are provided by the cysteine/cysteine desulfurase (IscS) system. The chain is tRNA-cytidine(32) 2-sulfurtransferase from Polaromonas naphthalenivorans (strain CJ2).